A 293-amino-acid polypeptide reads, in one-letter code: Probable endonuclease 4 (293 aa).

Zn(2+) contacts are provided by histidine 75, histidine 115, glutamate 153, aspartate 187, histidine 190, histidine 224, aspartate 237, histidine 239, and glutamate 269.

This sequence belongs to the AP endonuclease 2 family. The cofactor is Zn(2+).

It carries out the reaction Endonucleolytic cleavage to 5'-phosphooligonucleotide end-products.. Its function is as follows. Endonuclease IV plays a role in DNA repair. It cleaves phosphodiester bonds at apurinic or apyrimidinic (AP) sites, generating a 3'-hydroxyl group and a 5'-terminal sugar phosphate. This Chlamydia pneumoniae (Chlamydophila pneumoniae) protein is Probable endonuclease 4.